Reading from the N-terminus, the 386-residue chain is Benzoyl-CoA reductase subunit C (386 aa).

The protein belongs to the FldB/FldC dehydratase alpha/beta subunit family. Heterotetramer composed of A, B, C, and D subunits. Requires iron-sulfur cluster as cofactor. An oxidized flavin serves as cofactor.

It carries out the reaction cyclohexa-1,5-diene-1-carbonyl-CoA + oxidized 2[4Fe-4S]-[ferredoxin] + 2 ADP + 2 phosphate = reduced 2[4Fe-4S]-[ferredoxin] + benzoyl-CoA + 2 ATP + 2 H2O. It catalyses the reaction 3-hydroxybenzoyl-CoA + AH2 + 2 ATP + 2 H2O = 3-hydroxycyclohexa-1,5-diene-1-carbonyl-CoA + A + 2 ADP + 2 phosphate + 2 H(+). In terms of biological role, catalyzes the anaerobic reduction of benzoyl-CoA and 3-hydroxybenzoyl-CoA to form cyclohexa-1,5-diene-1-carbonyl-CoA and 3-hydroxycyclohexa-1,5-diene-1-carbonyl-CoA, respectively. The enzyme also reduces other benzoyl-CoA analogs with small substituents at the aromatic ring. This is Benzoyl-CoA reductase subunit C (bcrC) from Thauera aromatica.